The sequence spans 149 residues: Transcriptional repressor NrdR (149 aa).

The segment at Cys3–Cys34 is a zinc-finger region. The ATP-cone domain maps to Pro49 to Glu139.

It belongs to the NrdR family. Zn(2+) is required as a cofactor.

In terms of biological role, negatively regulates transcription of bacterial ribonucleotide reductase nrd genes and operons by binding to NrdR-boxes. The chain is Transcriptional repressor NrdR from Pseudoalteromonas translucida (strain TAC 125).